Here is a 203-residue protein sequence, read N- to C-terminus: Small ribosomal subunit protein uS10m (203 aa).

A mitochondrion-targeting transit peptide spans 1-14 (MLRNTIALRSFIRT). Residue serine 193 is modified to Phosphoserine.

The protein belongs to the universal ribosomal protein uS10 family. Component of the mitochondrial small ribosomal subunit (mt-SSU). Mature yeast 74S mitochondrial ribosomes consist of a small (37S) and a large (54S) subunit. The 37S small subunit contains a 15S ribosomal RNA (15S mt-rRNA) and 34 different proteins. The 54S large subunit contains a 21S rRNA (21S mt-rRNA) and 46 different proteins.

Its subcellular location is the mitochondrion. Functionally, component of the mitochondrial ribosome (mitoribosome), a dedicated translation machinery responsible for the synthesis of mitochondrial genome-encoded proteins, including at least some of the essential transmembrane subunits of the mitochondrial respiratory chain. The mitoribosomes are attached to the mitochondrial inner membrane and translation products are cotranslationally integrated into the membrane. The protein is Small ribosomal subunit protein uS10m (RSM10) of Saccharomyces cerevisiae (strain ATCC 204508 / S288c) (Baker's yeast).